Here is a 548-residue protein sequence, read N- to C-terminus: Membrane protein insertase YidC (548 aa).

Residues 6–26 traverse the membrane as a helical segment; that stretch reads NLLVIALLFVSFMIWQAWEQD. Residues 28-56 form a disordered region; the sequence is NPQPQTQQTTQTTTTAAGSAADQGVPASG. Low complexity predominate over residues 29 to 42; the sequence is PQPQTQQTTQTTTT. 4 consecutive transmembrane segments (helical) span residues 350-370, 424-444, 458-478, and 499-519; these read FVGNWGFSIIIITFIVRGIMY, FPLIIQMPIFLALYYMLMGSI, LSAQDPYYILPILMGVTMFFI, and PVIFTVFFLWFPSGLVLYYIV.

This sequence belongs to the OXA1/ALB3/YidC family. Type 1 subfamily. In terms of assembly, interacts with the Sec translocase complex via SecD. Specifically interacts with transmembrane segments of nascent integral membrane proteins during membrane integration.

Its subcellular location is the cell inner membrane. Required for the insertion and/or proper folding and/or complex formation of integral membrane proteins into the membrane. Involved in integration of membrane proteins that insert both dependently and independently of the Sec translocase complex, as well as at least some lipoproteins. Aids folding of multispanning membrane proteins. The protein is Membrane protein insertase YidC of Salmonella dublin (strain CT_02021853).